Reading from the N-terminus, the 65-residue chain is Vespid chemotactic peptide 5h (65 aa).

The N-terminal stretch at 1–23 (MKYNIVFLFAIIASLACLQLTFA) is a signal peptide. 7 AXPX repeats span residues 23 to 26 (AAPA), 27 to 30 (ASPL), 31 to 34 (ANPG), 35 to 38 (ASPD), 39 to 42 (AAPN), 43 to 46 (ADPL), and 47 to 50 (ADPF). A propeptide spanning residues 24 to 49 (APAASPLANPGASPDAAPNADPLADP) is cleaved from the precursor. Leucine amide is present on Leu-62.

The protein belongs to the MCD family. Crabrolin subfamily. In terms of tissue distribution, expressed by the venom gland.

It is found in the secreted. Shows antimicrobial activity against the Gram-negative bacteria E.coli ATCC 25922 (MIC=30 ug/ml), the Gram-positive bacteria S.aureus ATCC 2592 (MIC=5 ug/ml) and the fungus C.albicans ATCC 2002 (MIC=25 ug/ml). Acts as a mast cell degranulating peptide. Its mast cell degranulation activity may be related to the activation of G-protein coupled receptors in mast cells as well as interaction with other proteins located in cell endosomal membranes in the mast cells. Induces the chemotaxis of neutrophils. The protein is Vespid chemotactic peptide 5h of Vespa magnifica (Hornet).